A 231-amino-acid polypeptide reads, in one-letter code: tRNA (guanine-N(7)-)-methyltransferase (231 aa).

Glu-62, Glu-87, Asp-114, and Asp-137 together coordinate S-adenosyl-L-methionine. Residue Asp-137 is part of the active site. Substrate is bound by residues Lys-141, Asp-173, and 210–213 (TKFE).

This sequence belongs to the class I-like SAM-binding methyltransferase superfamily. TrmB family.

The enzyme catalyses guanosine(46) in tRNA + S-adenosyl-L-methionine = N(7)-methylguanosine(46) in tRNA + S-adenosyl-L-homocysteine. It functions in the pathway tRNA modification; N(7)-methylguanine-tRNA biosynthesis. In terms of biological role, catalyzes the formation of N(7)-methylguanine at position 46 (m7G46) in tRNA. This chain is tRNA (guanine-N(7)-)-methyltransferase, found in Methylococcus capsulatus (strain ATCC 33009 / NCIMB 11132 / Bath).